An 89-amino-acid chain; its full sequence is MAKKSVIARNEKRKRLVEQYAAKREELLKAGDYEALRKLPRDSSATRVRNRCVLTGRGRGVYEKFGLCRHMFRKLALEGKIPGVKKASW.

Belongs to the universal ribosomal protein uS14 family. As to quaternary structure, part of the 30S ribosomal subunit. Contacts proteins S3 and S10.

Binds 16S rRNA, required for the assembly of 30S particles and may also be responsible for determining the conformation of the 16S rRNA at the A site. The protein is Small ribosomal subunit protein uS14 of Chlorobium luteolum (strain DSM 273 / BCRC 81028 / 2530) (Pelodictyon luteolum).